Consider the following 556-residue polypeptide: Polypyrimidine tract-binding protein 1 (556 aa).

Met-1 carries the post-translational modification N-acetylmethionine. Residue Ser-16 is modified to Phosphoserine. Residues Ala-35 to Gly-54 form a disordered region. 3 RRM domains span residues Arg-58–Asn-142, Leu-183–Leu-259, and Ser-362–His-436. Residue Lys-64 forms a Glycyl lysine isopeptide (Lys-Gly) (interchain with G-Cter in SUMO2) linkage. Position 126 is a phosphotyrosine (Tyr-126). At Thr-137 the chain carries Phosphothreonine. Ser-140 is subject to Phosphoserine. Lys-217 participates in a covalent cross-link: Glycyl lysine isopeptide (Lys-Gly) (interchain with G-Cter in SUMO2). A disordered region spans residues His-436–Ser-458. The residue at position 458 (Ser-458) is a Phosphoserine. An RRM 4 domain is found at Ala-479 to Ser-554.

As to quaternary structure, monomer. Part of a ternary complex containing KHSRP, PTBP1, PTBP2 and HNRPH1. Interacts with RAVER1 and SFPQ.

It is found in the nucleus. In terms of biological role, plays a role in pre-mRNA splicing and in the regulation of alternative splicing events. Activates exon skipping of its own pre-mRNA during muscle cell differentiation. Binds to the polypyrimidine tract of introns. May promote RNA looping when bound to two separate polypyrimidine tracts in the same pre-mRNA. May promote the binding of U2 snRNP to pre-mRNA. Cooperates with RAVER1 to modulate switching between mutually exclusive exons during maturation of the TPM1 pre-mRNA. Represses the splicing of MAPT/Tau exon 10. Binds to polypyrimidine-rich controlling element (PCE) of CFTR and promotes exon skipping of CFTR exon 9, thereby antagonizing TIA1 and its role in exon inclusion of CFTR exon 9. Plays a role in the splicing of pyruvate kinase PKM by binding repressively to a polypyrimidine tract flanking PKM exon 9, inhibiting exon 9 inclusion and resulting in exon 10 inclusion and production of the PKM M2 isoform. The chain is Polypyrimidine tract-binding protein 1 (Ptbp1) from Rattus norvegicus (Rat).